We begin with the raw amino-acid sequence, 907 residues long: Avirulence protein A (907 aa).

Polar residues-rich tracts occupy residues methionine 1–leucine 11 and alanine 124–proline 136. Disordered stretches follow at residues methionine 1–leucine 47 and asparagine 116–tyrosine 157.

The sequence is that of Avirulence protein A (avrA) from Pseudomonas savastanoi pv. glycinea (Pseudomonas syringae pv. glycinea).